We begin with the raw amino-acid sequence, 108 residues long: PTS system fructose-like EIIB component 1 (108 aa).

The PTS EIIB type-2 domain maps to 1 to 101; the sequence is MSKKLIALCA…AAGIIKEIEE (101 aa). Cys11 acts as the Phosphocysteine intermediate in catalysis. Cys11 bears the Phosphocysteine; by EIIA mark.

The protein resides in the cytoplasm. The catalysed reaction is D-fructose(out) + N(pros)-phospho-L-histidyl-[protein] = D-fructose 1-phosphate(in) + L-histidyl-[protein]. In terms of biological role, the phosphoenolpyruvate-dependent sugar phosphotransferase system (sugar PTS), a major carbohydrate active transport system, catalyzes the phosphorylation of incoming sugar substrates concomitantly with their translocation across the cell membrane. The enzyme II FryABC PTS system is involved in fructose transport. In Shigella flexneri, this protein is PTS system fructose-like EIIB component 1 (fryB).